The following is a 243-amino-acid chain: 1-(5-phosphoribosyl)-5-[(5-phosphoribosylamino)methylideneamino] imidazole-4-carboxamide isomerase (243 aa).

The active-site Proton acceptor is the D8. The active-site Proton donor is the D130.

This sequence belongs to the HisA/HisF family.

The protein resides in the cytoplasm. The catalysed reaction is 1-(5-phospho-beta-D-ribosyl)-5-[(5-phospho-beta-D-ribosylamino)methylideneamino]imidazole-4-carboxamide = 5-[(5-phospho-1-deoxy-D-ribulos-1-ylimino)methylamino]-1-(5-phospho-beta-D-ribosyl)imidazole-4-carboxamide. It functions in the pathway amino-acid biosynthesis; L-histidine biosynthesis; L-histidine from 5-phospho-alpha-D-ribose 1-diphosphate: step 4/9. The chain is 1-(5-phosphoribosyl)-5-[(5-phosphoribosylamino)methylideneamino] imidazole-4-carboxamide isomerase from Acinetobacter baumannii (strain AB307-0294).